The chain runs to 233 residues: Urease accessory protein UreF (233 aa).

This sequence belongs to the UreF family. UreD, UreF and UreG form a complex that acts as a GTP-hydrolysis-dependent molecular chaperone, activating the urease apoprotein by helping to assemble the nickel containing metallocenter of UreC. The UreE protein probably delivers the nickel.

It localises to the cytoplasm. Required for maturation of urease via the functional incorporation of the urease nickel metallocenter. In Polaromonas sp. (strain JS666 / ATCC BAA-500), this protein is Urease accessory protein UreF.